Here is a 776-residue protein sequence, read N- to C-terminus: MADPGVCCFITKILCAHGGRMTLEELLGEIRLPEAQLYELLETAGPDRFVLLETGGQAGITRSVVATTRARVCRRKYCQRPCDSLHLCKLNLLGRCHYAQSQRNLCKYSHDVLSEQNFQILKNHELSGLNQEELACLLVQSDPFFLPEICKSYKGEGRKQTCGQPQPCERLHICEHFTRGNCSYLNCLRSHNLMDRKVLTIMREHGLSPDVVQNIQDICNNKHARRNPPGTRAAHPHRRGGAHRDRSKSRDRFLHNSLEFLSPVVSPLGSGPPSPDVTSCKDSLEDVSVDVTQKFKYLGTHDRAQLSPVSSKAAGVQGPSQMRASQEFSEDGNLDDIFSRNRSDSSSSRASAAKVAQRNEAVAMKMGMEVKGKKEAPDIDRVPFLNSYIDGVTMEKASVSGIPGKKFTANDLENLLLLNDTWKNVAKPQDLQTTGRITDSGQDKAFLQNKYGGNPVWASASTHNAPNGSSQIMDETPNVSKSSTSGFAIKPAIAGGKEAVYSGVQSPRSQVLAVPGEATTPVQSNRLPQSPLSSSSHRAAASGSPGKNSTHTSVSPAIESSRMTSDPDEYLLRYILNPLFRMDNHGPKEICQDHLYKGCQQSHCDRSHFHLPYRWQMFVYTTWRDFQDMESIEQAYCDPHVELILIENHQINFQKMTCDSYPIRRLSTPSYEEKPLSAVFATKWIWYWKNEFNEYIQYGNESPGHTSSDINSAYLESFFQSCPRGVLPFQAGSQKYELSFQGMIQTNIASKTQRHVVRRPVFVSSNDVEQKRRGPE.

At alanine 2 the chain carries N-acetylalanine. The segment at 2–254 (ADPGVCCFIT…DRSKSRDRFL (253 aa)) is N-terminal domain. Positions 69–76 (RARVCRRK) match the Nuclear localization signal motif. C3H1-type zinc fingers lie at residues 73–86 (CRRK…DSLH), 88–110 (CKLN…KYSH), 150–172 (CKSY…ERLH), and 169–193 (ERLH…SHNL). Residues 221-249 (NKHARRNPPGTRAAHPHRRGGAHRDRSKS) are disordered. The tract at residues 224-254 (ARRNPPGTRAAHPHRRGGAHRDRSKSRDRFL) is binding to EXOSC5. Phosphoserine; by GSK3-beta is present on residues serine 257, serine 262, serine 266, and serine 270. Serine 274 is subject to Phosphoserine. Threonine 278 bears the Phosphothreonine mark. Serine 283 is modified (phosphoserine). The Nuclear export signal motif lies at 284 to 291 (LEDVSVDV). Positions 308-355 (PVSSKAAGVQGPSQMRASQEFSEDGNLDDIFSRNRSDSSSSRASAAKV) are disordered. The span at 318 to 327 (GPSQMRASQE) shows a compositional bias: polar residues. Residues serine 325, serine 351, and serine 398 each carry the phosphoserine modification. The span at 344 to 353 (DSSSSRASAA) shows a compositional bias: low complexity. The short motif at 405–406 (KK) is the Nuclear localization signal element. The segment at 457 to 483 (WASASTHNAPNGSSQIMDETPNVSKSS) is disordered. Over residues 459–483 (SASTHNAPNGSSQIMDETPNVSKSS) the composition is skewed to polar residues. Phosphotyrosine is present on tyrosine 501. The segment at 512–562 (LAVPGEATTPVQSNRLPQSPLSSSSHRAAASGSPGKNSTHTSVSPAIESSR) is disordered. The span at 523-546 (QSNRLPQSPLSSSSHRAAASGSPG) shows a compositional bias: low complexity. Residues serine 544 and serine 667 each carry the phosphoserine modification. The 88-residue stretch at 671-758 (YEEKPLSAVF…ASKTQRHVVR (88 aa)) folds into the WWE domain.

This sequence belongs to the ARTD/PARP family. Homodimer or homooligomer. Homooligomerization is essential for its antiviral activity. Interacts with EXOSC5. Interacts with EXOSC3, EXOSC7, DCP2 and DCP1A. Interacts with PARN in an RNA-independent manner. Interacts with XRN1 in an RNA-dependent manner. Interacts (via N-terminal domain) with DHX30 (via N-terminus) in an RNA-independent manner. Interacts (via N-terminal domain) with DDX17 in an RNA-independent manner. Phosphorylation at Ser-274 is essential for sequential phosphorylation of Ser-270, Ser-266, Ser-262 and Ser-257 by GSK3-beta. Phosphorylation by GSK3-beta enhances its antiviral activity. In terms of tissue distribution, expressed in the kidney and liver.

Its subcellular location is the cytoplasm. It is found in the nucleus. Antiviral protein which inhibits the replication of viruses by recruiting the cellular RNA degradation machineries to degrade the viral mRNAs. Binds to a ZAP-responsive element (ZRE) present in the target viral mRNA, recruits cellular poly(A)-specific ribonuclease PARN to remove the poly(A) tail, and the 3'-5' exoribonuclease complex exosome to degrade the RNA body from the 3'-end. It also recruits the decapping complex DCP1-DCP2 through RNA helicase p72 (DDX17) to remove the cap structure of the viral mRNA to initiate its degradation from the 5'-end. Its target viruses belong to families which include retroviridae: human immunodeficiency virus type 1 (HIV-1) and moloney and murine leukemia virus (MoMLV), filoviridae: ebola virus (EBOV) and marburg virus (MARV), togaviridae: sindbis virus (SINV) and Ross river virus (RRV). Specifically targets the multiply spliced but not unspliced or singly spliced HIV-1 mRNAs for degradation. In Rattus norvegicus (Rat), this protein is Zinc finger CCCH-type antiviral protein 1 (Zc3hav1).